Consider the following 177-residue polypeptide: Large ribosomal subunit protein uL6 (177 aa).

It belongs to the universal ribosomal protein uL6 family. As to quaternary structure, part of the 50S ribosomal subunit.

In terms of biological role, this protein binds to the 23S rRNA, and is important in its secondary structure. It is located near the subunit interface in the base of the L7/L12 stalk, and near the tRNA binding site of the peptidyltransferase center. The chain is Large ribosomal subunit protein uL6 from Rhodopseudomonas palustris (strain BisA53).